A 92-amino-acid polypeptide reads, in one-letter code: Signal recognition particle 19 kDa protein (92 aa).

The protein belongs to the SRP19 family. As to quaternary structure, part of the signal recognition particle protein translocation system, which is composed of SRP and FtsY. Archaeal SRP consists of a 7S RNA molecule of 300 nucleotides and two protein subunits: SRP54 and SRP19.

The protein localises to the cytoplasm. Functionally, involved in targeting and insertion of nascent membrane proteins into the cytoplasmic membrane. Binds directly to 7S RNA and mediates binding of the 54 kDa subunit of the SRP. The polypeptide is Signal recognition particle 19 kDa protein (Halorubrum lacusprofundi (strain ATCC 49239 / DSM 5036 / JCM 8891 / ACAM 34)).